A 539-amino-acid polypeptide reads, in one-letter code: Putative dimethylaniline monooxygenase [N-oxide-forming] 6 (539 aa).

Residues 9-13, glutamate 32, 40-41, and 61-62 each bind FAD; these read GAGVS, LW, and NS. 195–198 serves as a coordination point for NADP(+); sequence SGSD. Residues 518–538 traverse the membrane as a helical segment; the sequence is FYNLLKMLSFPLLLLAVTLTF.

The protein belongs to the FMO family. The cofactor is FAD.

The protein resides in the microsome membrane. It localises to the endoplasmic reticulum membrane. The enzyme catalyses N,N-dimethylaniline + NADPH + O2 + H(+) = N,N-dimethylaniline N-oxide + NADP(+) + H2O. It is probable that this protein is only produced in very small quantity or not at all as the gene coding for it seems to be unable to produce full-length transcripts. This is Putative dimethylaniline monooxygenase [N-oxide-forming] 6 (FMO6P) from Homo sapiens (Human).